We begin with the raw amino-acid sequence, 779 residues long: Pleckstrin homology domain-containing family A member 4 (779 aa).

The 100-residue stretch at proline 54–arginine 153 folds into the PH domain. Disordered regions lie at residues serine 152 to proline 355, alanine 495 to histidine 669, and serine 694 to glycine 766. Serine 164 is subject to Phosphoserine. Basic and acidic residues predominate over residues valine 183–glutamate 193. Low complexity-rich tracts occupy residues proline 246–serine 259 and glutamine 324–threonine 334. The span at glutamine 517–leucine 527 shows a compositional bias: basic and acidic residues. Low complexity predominate over residues serine 528 to glutamate 540. At serine 562 the chain carries Phosphoserine. A compositionally biased stretch (polar residues) spans arginine 567–leucine 580. Low complexity-rich tracts occupy residues glycine 608 to serine 627 and serine 649 to serine 659. Over residues valine 720 to glycine 740 the composition is skewed to polar residues.

It localises to the cytoplasm. Its subcellular location is the membrane. Binds specifically to phosphatidylinositol 3-phosphate (PtdIns3P), but not to other phosphoinositides. The chain is Pleckstrin homology domain-containing family A member 4 (Plekha4) from Rattus norvegicus (Rat).